A 236-amino-acid polypeptide reads, in one-letter code: Mitochondrial inner membrane protease ATP23 (236 aa).

H136 is an a divalent metal cation binding site. E137 is an active-site residue. H140 is an a divalent metal cation binding site.

It belongs to the peptidase M76 family.

Its subcellular location is the mitochondrion inner membrane. Its function is as follows. Has a dual role in the assembly of mitochondrial ATPase. Acts as a protease that removes N-terminal residues of mitochondrial ATPase CF(0) subunit 6 at the intermembrane space side. Also involved in the correct assembly of the membrane-embedded ATPase CF(0) particle, probably mediating association of subunit 6 with the subunit 9 ring. The protein is Mitochondrial inner membrane protease ATP23 (ATP23) of Debaryomyces hansenii (strain ATCC 36239 / CBS 767 / BCRC 21394 / JCM 1990 / NBRC 0083 / IGC 2968) (Yeast).